Here is a 442-residue protein sequence, read N- to C-terminus: Hydroxycinnamoyltransferase 2 (442 aa).

Residues His-159 and Asp-389 each act as proton acceptor in the active site.

Belongs to the plant acyltransferase family. Expressed in roots and leaves. Expressed at low levels in stems and seeds.

Hydroxycinnamoyl transferase that catalyzes the transfer of an acyl from p-coumaryol-CoA to various acyl acceptors. Can use feruloyl-CoA and caffeoyl-CoA as acyl donors. The chain is Hydroxycinnamoyltransferase 2 from Oryza sativa subsp. japonica (Rice).